Consider the following 569-residue polypeptide: Aspartokinase 1, chloroplastic (569 aa).

Residues 1 to 90 (MAATRVRCCH…VDEKGITCVM (90 aa)) constitute a chloroplast transit peptide. 3 residues coordinate ATP: lysine 91, glycine 94, and serine 123. Residue glutamate 207 coordinates substrate. 2 consecutive ACT domains span residues 405 to 483 (IAST…AIIS) and 484 to 560 (LIGN…GNGS). L-lysine contacts are provided by glutamine 413 and glycine 415. Serine 430 contributes to the S-adenosyl-L-methionine binding site. Residues valine 431, aspartate 432, and serine 437 each contribute to the L-lysine site. 2 residues coordinate S-adenosyl-L-methionine: serine 452 and arginine 453.

It belongs to the aspartokinase family. Homodimer.

The protein resides in the plastid. Its subcellular location is the chloroplast. The enzyme catalyses L-aspartate + ATP = 4-phospho-L-aspartate + ADP. Its pathway is amino-acid biosynthesis; L-lysine biosynthesis via DAP pathway; (S)-tetrahydrodipicolinate from L-aspartate: step 1/4. The protein operates within amino-acid biosynthesis; L-methionine biosynthesis via de novo pathway; L-homoserine from L-aspartate: step 1/3. It participates in amino-acid biosynthesis; L-threonine biosynthesis; L-threonine from L-aspartate: step 1/5. Its activity is regulated as follows. Inhibited by S-adenosyl-L-methionine (SAM) and lysine in a synergistic manner. No inhibition by threonine, leucine or SAM alone, and no activation or inhibition by alanine, cysteine, isoleucine, serine, valine, methionine, glutamine, asparagine, glutamic acid or arginine. Functionally, involved in the first step of essential amino acids lysine, threonine, methionine and isoleucine synthesis via the aspartate-family pathway. This chain is Aspartokinase 1, chloroplastic (AK1), found in Arabidopsis thaliana (Mouse-ear cress).